Consider the following 100-residue polypeptide: Putative exopolysaccharide production repressor protein y4xQ (100 aa).

A run of 2 helical transmembrane segments spans residues 9–29 (ILWL…GSIS) and 35–55 (TMVG…FLLW). The tract at residues 66–100 (TTGQFHGEEQPGDPRIAGTHGRTDGDPCFEDEDSR) is disordered.

This sequence to Rhizobium exopolysaccharide production repressor protein (ExoX).

The protein resides in the cell membrane. Functionally, could be involved in the inhibition of exopolysaccharide synthesis (EPS) and nodulation ability (nod). In Sinorhizobium fredii (strain NBRC 101917 / NGR234), this protein is Putative exopolysaccharide production repressor protein y4xQ.